The following is a 103-amino-acid chain: Small ribosomal subunit protein uS10 (103 aa).

The protein belongs to the universal ribosomal protein uS10 family. Part of the 30S ribosomal subunit.

Involved in the binding of tRNA to the ribosomes. The chain is Small ribosomal subunit protein uS10 from Polynucleobacter asymbioticus (strain DSM 18221 / CIP 109841 / QLW-P1DMWA-1) (Polynucleobacter necessarius subsp. asymbioticus).